We begin with the raw amino-acid sequence, 588 residues long: MMRTHYCGALNRNNIGQDVTLSGWVHRRRDLGGLIFIDMRDRDGIVQVCFDPKYQDALTAAAGLRNEFCIQIKGEVIARPENQINKNMATGEVEVLAKELRVYNASDVLPLDFNQNNTEEQRLKYRYLDLRRPEMAQRLKTRAKITSFVRRFMDDNGFLDIETPMLTKATPEGARDYLVPSRVHKGKFYALPQSPQLFKQLLMMSGFDRYYQIVKCFRDEDLRADRQPEFTQIDVETSFLTAPEVREIMERMVHGLWLDTIGVDLGKFPVMTWQEAMRRFGSDKPDLRNPLEIVDVADIVKDVEFKVFNEPANNPNGRVAVIRVPNGAEITRKQIDEYTQFVGIYGAKGLAWAKVNDINAGLEGVQSPIAKFLNEEVWKALAERVNAQTGDILFFGADKWQTTTDAMGALRLKLGRDLGLTRLDEWKPLWVIDFPMFERDEEGNLAAMHHPFTSPKDFSPEQLEADPTSAVANAYDMVINGYEVGGGSVRIFDPKMQQTVFRILGIDEEQQREKFGFLLDALKFGTPPHAGLAFGLDRLTMLLTGTENIRDVIAFPKTTAAACLMTEAPSFANPQALEELAIQVTKSE.

Residue E172 coordinates L-aspartate. Positions 196–199 (QLFK) are aspartate. R218 is an L-aspartate binding site. ATP contacts are provided by residues 218–220 (RDE) and Q227. H449 lines the L-aspartate pocket. Position 483 (E483) interacts with ATP. Residue R490 participates in L-aspartate binding. Residue 535–538 (GLDR) participates in ATP binding.

Belongs to the class-II aminoacyl-tRNA synthetase family. Type 1 subfamily. As to quaternary structure, homodimer.

Its subcellular location is the cytoplasm. It carries out the reaction tRNA(Asp) + L-aspartate + ATP = L-aspartyl-tRNA(Asp) + AMP + diphosphate. Catalyzes the attachment of L-aspartate to tRNA(Asp) in a two-step reaction: L-aspartate is first activated by ATP to form Asp-AMP and then transferred to the acceptor end of tRNA(Asp). This chain is Aspartate--tRNA ligase, found in Haemophilus influenzae (strain PittEE).